We begin with the raw amino-acid sequence, 464 residues long: E3 ubiquitin-protein ligase RNF38 (464 aa).

The disordered stretch occupies residues 1 to 94 (MRESEDSPSP…NSISQDENYH (94 aa)). The Bipartite nuclear localization signal 1 signature appears at 6–20 (DSPSPKRQRLSHSVF). Over residues 38 to 53 (MTSNRQPPSVRPNQHH) the composition is skewed to polar residues. The short motif at 64–79 (RNRRSPPVRRQRGRRE) is the Bipartite nuclear localization signal 2 element. Residues 64–83 (RNRRSPPVRRQRGRRERLSR) are compositionally biased toward basic residues. The segment at 412–453 (CVVCMCDFESRQLLRVLPCNHEFHAKCVDKWLKGNRTCPICR) adopts an RING-type zinc-finger fold.

It is found in the nucleus. The enzyme catalyses S-ubiquitinyl-[E2 ubiquitin-conjugating enzyme]-L-cysteine + [acceptor protein]-L-lysine = [E2 ubiquitin-conjugating enzyme]-L-cysteine + N(6)-ubiquitinyl-[acceptor protein]-L-lysine.. The protein operates within protein modification; protein ubiquitination. Acts as an E3 ubiquitin-protein ligase able to ubiquitinate p53/TP53 which promotes its relocalization to discrete foci associated with PML nuclear bodies. Exhibits preference for UBE2D2 as a E2 enzyme. This Mus musculus (Mouse) protein is E3 ubiquitin-protein ligase RNF38.